Here is a 584-residue protein sequence, read N- to C-terminus: Protein DENND6A (584 aa).

The interval 1 to 23 (MALWERGAGGAAEAGEDATEEPE) is disordered. The region spanning 39–218 (HCVCVVGFDL…KLRIPTYRDK (180 aa)) is the uDENN domain. The cDENN domain maps to 244-369 (EVDLFRCFCP…VKVKKLKNLK (126 aa)). Residues 371 to 504 (LDSKPGVYTS…RSRQKEMTQN (134 aa)) form the dDENN domain.

This sequence belongs to the DENND6 family.

The protein localises to the recycling endosome. The protein resides in the cytoplasm. Functionally, guanine nucleotide exchange factor (GEF) for RAB14. The chain is Protein DENND6A (DENND6A) from Gallus gallus (Chicken).